The chain runs to 312 residues: Olfactory receptor 6Z7 (312 aa).

Topologically, residues 1 to 29 (MERSLALANMTRVQQFILLGLSTRLDIRD) are extracellular. N-linked (GlcNAc...) asparagine glycosylation occurs at N9. Residues 30–50 (ALFAVFLTLYLLTLLENTLII) traverse the membrane as a helical segment. At 51-69 (YLICSHKELHKPMYFFLGN) the chain is on the cytoplasmic side. A helical transmembrane segment spans residues 70-90 (LSCLEMCYVSVTMPTLLMGLW). Residue N91 is a topological domain, extracellular. The helical transmembrane segment at 92-112 (GLYHIPFIACMTQLFFFIVLV) threads the bilayer. C101 and C193 form a disulfide bridge. Topologically, residues 113–141 (GTECILLASMAYDRYVAICRPLHYPVLMR) are cytoplasmic. A helical membrane pass occupies residues 142 to 162 (PQVCLGLAMISWLGGLLVSMI). Residues 163–195 (KTTCIATLSYCGPNVLNHFFCDVSPLLNLSCTH) are Extracellular-facing. An N-linked (GlcNAc...) asparagine glycan is attached at N190. A helical transmembrane segment spans residues 196 to 216 (VALTELVDFISAIVILWGCFL). The Cytoplasmic portion of the chain corresponds to 217–241 (TTMASYVAIGRAVLRMPSTTARYKA). Residues 242 to 262 (FSTCASHLVVVGIFYSVTIFI) form a helical membrane-spanning segment. The Extracellular portion of the chain corresponds to 263 to 275 (YARPKRIEAMDLN). The chain crosses the membrane as a helical span at residues 276 to 296 (KVLSVIYTVVTPMCNPVIYCL). The Cytoplasmic segment spans residues 297 to 312 (RNKEVQVALHRTMHWS).

The protein belongs to the G-protein coupled receptor 1 family.

Its subcellular location is the cell membrane. Functionally, odorant receptor. This Mus musculus (Mouse) protein is Olfactory receptor 6Z7.